The primary structure comprises 494 residues: Glycerol kinase (494 aa).

ADP is bound at residue threonine 13. ATP is bound by residues threonine 13, threonine 14, and serine 15. Threonine 13 serves as a coordination point for sn-glycerol 3-phosphate. ADP is bound at residue arginine 17. Sn-glycerol 3-phosphate is bound by residues arginine 83, glutamate 84, tyrosine 135, and aspartate 244. Residues arginine 83, glutamate 84, tyrosine 135, aspartate 244, and glutamine 245 each contribute to the glycerol site. Residues threonine 266 and glycine 309 each contribute to the ADP site. ATP-binding residues include threonine 266, glycine 309, glutamine 313, and glycine 410. Residues glycine 410 and asparagine 414 each contribute to the ADP site.

Belongs to the FGGY kinase family.

The catalysed reaction is glycerol + ATP = sn-glycerol 3-phosphate + ADP + H(+). The protein operates within polyol metabolism; glycerol degradation via glycerol kinase pathway; sn-glycerol 3-phosphate from glycerol: step 1/1. With respect to regulation, inhibited by fructose 1,6-bisphosphate (FBP). Key enzyme in the regulation of glycerol uptake and metabolism. Catalyzes the phosphorylation of glycerol to yield sn-glycerol 3-phosphate. The sequence is that of Glycerol kinase from Shewanella putrefaciens (strain CN-32 / ATCC BAA-453).